Consider the following 600-residue polypeptide: Probable tripeptidyl-peptidase SED4 (600 aa).

An N-terminal signal peptide occupies residues 1–22; it reads MVSFTLRAIGACLIGLPALITA. A propeptide spans 23–202 (removed in mature form); that stretch reads APTSHVSNDF…SVFTSDLEIT (180 aa). N-linked (GlcNAc...) asparagine glycosylation is found at Asn-210 and Asn-281. The Peptidase S53 domain occupies 212-600; that stretch reads TITPDCIREL…FEKLSKLVLI (389 aa). Catalysis depends on charge relay system residues Glu-288 and Asp-292. 2 N-linked (GlcNAc...) asparagine glycosylation sites follow: Asn-323 and Asn-404. The active-site Charge relay system is Ser-504. Ca(2+) is bound by residues Asp-546 and Ile-547. Asn-575 carries an N-linked (GlcNAc...) asparagine glycan. Positions 579 and 581 each coordinate Ca(2+).

It depends on Ca(2+) as a cofactor.

The protein localises to the secreted. Its subcellular location is the extracellular space. The catalysed reaction is Release of an N-terminal tripeptide from a polypeptide.. Secreted tripeptidyl-peptidase which degrades proteins at acidic pHs and is involved in virulence. In Arthroderma benhamiae (strain ATCC MYA-4681 / CBS 112371) (Trichophyton mentagrophytes), this protein is Probable tripeptidyl-peptidase SED4 (SED4).